Reading from the N-terminus, the 130-residue chain is ATP synthase epsilon chain (130 aa).

Belongs to the ATPase epsilon chain family. In terms of assembly, F-type ATPases have 2 components, CF(1) - the catalytic core - and CF(0) - the membrane proton channel. CF(1) has five subunits: alpha(3), beta(3), gamma(1), delta(1), epsilon(1). CF(0) has three main subunits: a, b and c.

Its subcellular location is the cell inner membrane. Functionally, produces ATP from ADP in the presence of a proton gradient across the membrane. The chain is ATP synthase epsilon chain from Sulfurimonas denitrificans (strain ATCC 33889 / DSM 1251) (Thiomicrospira denitrificans (strain ATCC 33889 / DSM 1251)).